Reading from the N-terminus, the 1579-residue chain is DNA-directed RNA polymerase subunit beta' (1579 aa).

Zn(2+)-binding residues include Cys65, Cys67, Cys80, and Cys83. Mg(2+)-binding residues include Asp601, Asp603, and Asp605. Zn(2+) contacts are provided by Cys938, Cys1012, Cys1019, and Cys1022.

Belongs to the RNA polymerase beta' chain family. In terms of assembly, the RNAP catalytic core consists of 2 alpha, 1 beta, 1 beta' and 1 omega subunit. When a sigma factor is associated with the core the holoenzyme is formed, which can initiate transcription. Mg(2+) is required as a cofactor. The cofactor is Zn(2+).

The enzyme catalyses RNA(n) + a ribonucleoside 5'-triphosphate = RNA(n+1) + diphosphate. DNA-dependent RNA polymerase catalyzes the transcription of DNA into RNA using the four ribonucleoside triphosphates as substrates. This is DNA-directed RNA polymerase subunit beta' from Sulfurihydrogenibium sp. (strain YO3AOP1).